A 319-amino-acid chain; its full sequence is tRNA(Ile)-lysidine synthase (319 aa).

32 to 37 (SGGSDS) lines the ATP pocket.

It belongs to the tRNA(Ile)-lysidine synthase family.

It is found in the cytoplasm. The enzyme catalyses cytidine(34) in tRNA(Ile2) + L-lysine + ATP = lysidine(34) in tRNA(Ile2) + AMP + diphosphate + H(+). Ligates lysine onto the cytidine present at position 34 of the AUA codon-specific tRNA(Ile) that contains the anticodon CAU, in an ATP-dependent manner. Cytidine is converted to lysidine, thus changing the amino acid specificity of the tRNA from methionine to isoleucine. This is tRNA(Ile)-lysidine synthase from Chlamydia pneumoniae (Chlamydophila pneumoniae).